The following is a 313-amino-acid chain: Olfactory receptor 10K1 (313 aa).

Residues 1-25 lie on the Extracellular side of the membrane; that stretch reads MEQVNKTVVREFVVLGFSSLARLQQ. A glycan (N-linked (GlcNAc...) asparagine) is linked at Asn5. A helical membrane pass occupies residues 26 to 46; the sequence is LLFVIFLLLYLFTLGTNAIII. Over 47-54 the chain is Cytoplasmic; sequence STIVLDRA. Residues 55–75 form a helical membrane-spanning segment; the sequence is LHTPMYFFLAILSCSEICYTF. Residues 76 to 99 lie on the Extracellular side of the membrane; it reads VIVPKMLVDLLSQKKTISFLGCAI. Residues 100–120 traverse the membrane as a helical segment; the sequence is QMFSFLFFGSSHSFLLAAMGY. Residues 121–139 are Cytoplasmic-facing; it reads DRYMAICNPLRYSVLMGHG. The chain crosses the membrane as a helical span at residues 140–160; sequence VCMGLMAAACACGFTVSLVTT. Topologically, residues 161–197 are extracellular; sequence SLVFHLPFHSSNQLHHFFCDISPVLKLASQHSGFSQL. The helical transmembrane segment at 198 to 217 threads the bilayer; the sequence is VIFMLGVFALVIPLLLILVS. The Cytoplasmic segment spans residues 218–237; it reads YIRIISAILKIPSSVGRYKT. The chain crosses the membrane as a helical span at residues 238–258; that stretch reads FSTCASHLIVVTVHYSCASFI. Residues 259 to 271 lie on the Extracellular side of the membrane; it reads YLRPKTNYTSSQD. Asn265 is a glycosylation site (N-linked (GlcNAc...) asparagine). Residues 272-292 form a helical membrane-spanning segment; that stretch reads TLISVSYTILTPLFNPMIYSL. Residues 293 to 313 lie on the Cytoplasmic side of the membrane; it reads RNKEFKSALRRTIGQTFYPLS.

Belongs to the G-protein coupled receptor 1 family.

Its subcellular location is the cell membrane. Functionally, odorant receptor. The sequence is that of Olfactory receptor 10K1 (OR10K1) from Homo sapiens (Human).